Here is a 40-residue protein sequence, read N- to C-terminus: Photosystem II reaction center protein J (40 aa).

Residues 10 to 30 traverse the membrane as a helical segment; the sequence is LWIIGTVTGILVIGLIGIFFF.

The protein belongs to the PsbJ family. As to quaternary structure, PSII is composed of 1 copy each of membrane proteins PsbA, PsbB, PsbC, PsbD, PsbE, PsbF, PsbH, PsbI, PsbJ, PsbK, PsbL, PsbM, PsbT, PsbX, PsbY, PsbZ, Psb30/Ycf12, at least 3 peripheral proteins of the oxygen-evolving complex and a large number of cofactors. It forms dimeric complexes.

The protein resides in the plastid membrane. Functionally, one of the components of the core complex of photosystem II (PSII). PSII is a light-driven water:plastoquinone oxidoreductase that uses light energy to abstract electrons from H(2)O, generating O(2) and a proton gradient subsequently used for ATP formation. It consists of a core antenna complex that captures photons, and an electron transfer chain that converts photonic excitation into a charge separation. The sequence is that of Photosystem II reaction center protein J from Cuscuta exaltata (Tall dodder).